We begin with the raw amino-acid sequence, 274 residues long: 2,3,4,5-tetrahydropyridine-2,6-dicarboxylate N-succinyltransferase (274 aa).

The substrate site is built by R104 and D141.

Belongs to the transferase hexapeptide repeat family. In terms of assembly, homotrimer.

The protein resides in the cytoplasm. It catalyses the reaction (S)-2,3,4,5-tetrahydrodipicolinate + succinyl-CoA + H2O = (S)-2-succinylamino-6-oxoheptanedioate + CoA. It functions in the pathway amino-acid biosynthesis; L-lysine biosynthesis via DAP pathway; LL-2,6-diaminopimelate from (S)-tetrahydrodipicolinate (succinylase route): step 1/3. The protein is 2,3,4,5-tetrahydropyridine-2,6-dicarboxylate N-succinyltransferase of Sodalis glossinidius (strain morsitans).